A 287-amino-acid chain; its full sequence is Small ribosomal subunit protein uS2 (287 aa).

Residues 233 to 287 are disordered; sequence HKAPQDDIEPMAEWEKQLLQSGDSSGETRPISGTDRPLDGDLSKGPAPQDEELSD. Residues 250–259 show a composition bias toward polar residues; that stretch reads LLQSGDSSGE.

This sequence belongs to the universal ribosomal protein uS2 family.

This chain is Small ribosomal subunit protein uS2, found in Tropheryma whipplei (strain TW08/27) (Whipple's bacillus).